The chain runs to 690 residues: Proprotein convertase subtilisin/kexin type 9 (690 aa).

Residues 1–28 (MGTVRSRRLWWPLPLLLLLLLGPAGARA) form the signal peptide. The propeptide occupies 29–150 (QEDDDGDYEE…IEEDSYVFAQ (122 aa)). Tyr-36 carries the post-translational modification Sulfotyrosine. Ser-45 is modified (phosphoserine). One can recognise an Inhibitor I9 domain in the interval 75-147 (TYVVVLKEET…VDYIEEDSYV (73 aa)). Positions 153–459 (PWNLERITPA…GWQLFCRTVW (307 aa)) constitute a Peptidase S8 domain. Catalysis depends on charge relay system residues Asp-184 and His-224. 2 disulfide bridges follow: Cys-221/Cys-253 and Cys-321/Cys-356. Ser-384 acts as the Charge relay system in catalysis. Residues 448-690 (GAGWQLFCRT…HLAQASQELQ (243 aa)) form a C-terminal domain region. Disulfide bonds link Cys-455–Cys-525, Cys-475–Cys-524, and Cys-484–Cys-507. N-linked (GlcNAc...) asparagine glycosylation occurs at Asn-531. 6 cysteine pairs are disulfide-bonded: Cys-532/Cys-599, Cys-550/Cys-598, Cys-560/Cys-586, Cys-606/Cys-677, Cys-624/Cys-676, and Cys-633/Cys-652. Phosphoserine is present on Ser-686.

This sequence belongs to the peptidase S8 family. In terms of assembly, monomer. Can self-associate to form dimers and higher multimers which may have increased LDLR degrading activity. The precursor protein but not the mature protein may form multimers. Interacts with APOB, VLDLR, LRP8/APOER2 and BACE1. The full-length immature form (pro-PCSK9) interacts with SCNN1A, SCNN1B and SCNN1G. The pro-PCSK9 form (via C-terminal domain) interacts with LDLR. Interacts (via the C-terminal domain) with ANXA2 (via repeat Annexin 1); the interaction inhibits the degradation of LDLR. Requires Ca(2+) as cofactor. Post-translationally, cleavage by furin and PCSK5 generates a truncated inactive protein that is unable to induce LDLR degradation. Undergoes autocatalytic cleavage in the endoplasmic reticulum to release the propeptide from the N-terminus and the cleavage of the propeptide is strictly required for its maturation and activation. The cleaved propeptide however remains associated with the catalytic domain through non-covalent interactions, preventing potential substrates from accessing its active site. As a result, it is secreted from cells as a propeptide-containing, enzymatically inactive protein. In terms of processing, phosphorylation protects the propeptide against proteolysis.

The protein resides in the cytoplasm. The protein localises to the secreted. Its subcellular location is the endosome. It localises to the lysosome. It is found in the cell surface. The protein resides in the endoplasmic reticulum. The protein localises to the golgi apparatus. Its activity is regulated as follows. Its proteolytic activity is autoinhibited by the non-covalent binding of the propeptide to the catalytic domain. Inhibited by EGTA. In terms of biological role, crucial player in the regulation of plasma cholesterol homeostasis. Binds to low-density lipid receptor family members: low density lipoprotein receptor (LDLR), very low density lipoprotein receptor (VLDLR), apolipoprotein E receptor (LRP1/APOER) and apolipoprotein receptor 2 (LRP8/APOER2), and promotes their degradation in intracellular acidic compartments. Acts via a non-proteolytic mechanism to enhance the degradation of the hepatic LDLR through a clathrin LDLRAP1/ARH-mediated pathway. May prevent the recycling of LDLR from endosomes to the cell surface or direct it to lysosomes for degradation. Can induce ubiquitination of LDLR leading to its subsequent degradation. Inhibits intracellular degradation of APOB via the autophagosome/lysosome pathway in a LDLR-independent manner. Involved in the disposal of non-acetylated intermediates of BACE1 in the early secretory pathway. Inhibits epithelial Na(+) channel (ENaC)-mediated Na(+) absorption by reducing ENaC surface expression primarily by increasing its proteasomal degradation. Regulates neuronal apoptosis via modulation of LRP8/APOER2 levels and related anti-apoptotic signaling pathways. The polypeptide is Proprotein convertase subtilisin/kexin type 9 (PCSK9) (Lagothrix lagotricha (Brown woolly monkey)).